The sequence spans 621 residues: Interleukin-1 receptor-associated kinase-like 2 (621 aa).

A Death domain is found at 13 to 94; it reads LDDLCRNMDT…RAAQIILNWK (82 aa). Residues 113–175 form a disordered region; that stretch reads GKPLAASVRN…TASADSKDFS (63 aa). A compositionally biased stretch (polar residues) spans 157-169; sequence ASSSLKTNQTASA. One can recognise a Protein kinase domain in the interval 206-476; the sequence is FNPSHKISEG…AEALVMAACL (271 aa). Residues 212–220, lysine 233, and 333–336 each bind ATP; these read ISEGTFADV and KSSN. The segment covering 503-522 has biased composition (polar residues); it reads ETSLPCSGLSEGTGSSFNTP. The tract at residues 503 to 534 is disordered; it reads ETSLPCSGLSEGTGSSFNTPEETDDVDNSSFD.

Belongs to the protein kinase superfamily. TKL Ser/Thr protein kinase family. Pelle subfamily. In terms of assembly, interacts with MYD88. IL-1 stimulation leads to the formation of a signaling complex which dissociates from the IL-1 receptor following the binding of PELI1.

In terms of biological role, binds to the IL-1 type I receptor following IL-1 engagement, triggering intracellular signaling cascades leading to transcriptional up-regulation and mRNA stabilization. The protein is Interleukin-1 receptor-associated kinase-like 2 (IRAK2) of Bos taurus (Bovine).